Consider the following 600-residue polypeptide: Gamma-terpinene synthase, chloroplastic (600 aa).

Residues 1-40 (MALNLLSSLPAACNFTRLSLPLSSKVNGFVPPITQVQYPM) constitute a chloroplast transit peptide. Residues Asp-353, Asp-357, Asp-498, and Glu-506 each contribute to the Mg(2+) site. The DDXXD motif motif lies at 353–357 (DDVYD).

The protein belongs to the terpene synthase family. The cofactor is Mn(2+). Mg(2+) serves as cofactor.

Its subcellular location is the plastid. The protein resides in the chloroplast. It catalyses the reaction (2E)-geranyl diphosphate = gamma-terpinene + diphosphate. It functions in the pathway secondary metabolite biosynthesis; terpenoid biosynthesis. Inhibited by 100 mM KCl. Monoterpene synthase which catalyzes the conversion of geranyl diphosphate to gamma-terpinene and the minor products limonene, alpha-pinene, beta-pinene, alpha-terpinolene, alpha-thujene, alpha-terpinene, myrcene and sabinene. The chain is Gamma-terpinene synthase, chloroplastic from Citrus limon (Lemon).